The sequence spans 862 residues: Phosphatidic acid phosphohydrolase 1 (862 aa).

The N-LIP stretch occupies residues 19 to 104 (NPATLSGAID…VPDELLVSPV (86 aa)). 2 disordered regions span residues 104 to 183 (VMSA…SVEE) and 300 to 341 (GSTL…AGSG). Over residues 105-117 (MSATSSPPQSPET) the composition is skewed to polar residues. A phosphoserine mark is found at Ser-110 and Ser-114. The span at 132-143 (NENKKKEKKVLE) shows a compositional bias: basic and acidic residues. Composition is skewed to low complexity over residues 161 to 179 (SETT…TPPD) and 300 to 313 (GSTL…PSGS). Ser-168 carries the post-translational modification Phosphoserine. Positions 398–402 (DIDGT) match the DXDXT motif motif. The residue at position 496 (Lys-496) is an N6-acetyllysine. Ser-511 carries the post-translational modification Phosphoserine. Ser-602 is modified (phosphoserine; by CDC28). The interval 648–732 (SDISNDDSDN…TPNKSTMSKG (85 aa)) is disordered. Positions 651-663 (SNDDSDNIDEDTD) are enriched in acidic residues. 2 stretches are compositionally biased toward polar residues: residues 664–679 (VSQQ…NSVK) and 687–699 (PQRN…NNNE). Residues 710 to 730 (ASDLVSSHSSSGSTPNKSTMS) are compositionally biased toward low complexity. A Phosphothreonine; by CDC28 modification is found at Thr-723. Ser-744 carries the phosphoserine; by CDC28 modification. A phosphoserine mark is found at Ser-748, Ser-773, and Ser-774. A disordered region spans residues 757–780 (MDDEDSNYNRTKSRRASSAAATSI). An N6-acetyllysine modification is found at Lys-801. The disordered stretch occupies residues 807-862 (DVHSLGNSDTESRREQSVNETGRNQLPHNSMDDKDLDSRVSDEFDDDEFDEDEFED). 2 positions are modified to phosphoserine: Ser-810 and Ser-814. At Thr-816 the chain carries Phosphothreonine. A compositionally biased stretch (polar residues) spans 824–834 (VNETGRNQLPH). Basic and acidic residues predominate over residues 836–848 (SMDDKDLDSRVSD). Phosphoserine is present on residues Ser-844 and Ser-847. Residues 849 to 862 (EFDDDEFDEDEFED) are compositionally biased toward acidic residues.

Belongs to the lipin family. Mg(2+) is required as a cofactor. In terms of processing, acetylation at Lys-496 and Lys-801 by ESA1 promotes synthesis of diacylglycerol. Phosphorylated by CDC28 at the onset of mitosis, and dephosphorylated by the NEM1-SPO7 complex. Phosphorylation regulates recruitment on promoters of lipid biosynthetic enzymes.

The protein localises to the cytoplasm. It localises to the nucleus membrane. Its subcellular location is the endoplasmic reticulum membrane. The enzyme catalyses a 1,2-diacyl-sn-glycero-3-phosphate + H2O = a 1,2-diacyl-sn-glycerol + phosphate. With respect to regulation, phenylglyoxal and propranolol inhibit activity in dose-dependent manners with IC(50) values of 1.3 mM and 0.2 mM, respectively. Sertraline inhibits activity in a dose-dependent manner with an IC(50) value of 85 uM; the inhibitory effects of sertraline and propranolol are additive. Functionally, mg(2+)-dependent phosphatidate (PA) phosphatase which catalyzes the dephosphorylation of PA to yield diacylglycerol. Required for de novo lipid synthesis and formation of lipid droplets. Controls transcription of phospholipid biosynthetic genes and nuclear structure by regulating the amount of membrane present at the nuclear envelope. Involved in plasmid maintenance, in respiration and in cell proliferation. The protein is Phosphatidic acid phosphohydrolase 1 (PAH1) of Saccharomyces cerevisiae (strain ATCC 204508 / S288c) (Baker's yeast).